The chain runs to 310 residues: tRNA dimethylallyltransferase (310 aa).

Position 9 to 16 (9 to 16) interacts with ATP; that stretch reads GPTAVGKT. A substrate-binding site is contributed by 11–16; sequence TAVGKT. The interaction with substrate tRNA stretch occupies residues 34 to 37; the sequence is DSMQ.

Belongs to the IPP transferase family. Monomer. It depends on Mg(2+) as a cofactor.

It carries out the reaction adenosine(37) in tRNA + dimethylallyl diphosphate = N(6)-dimethylallyladenosine(37) in tRNA + diphosphate. Its function is as follows. Catalyzes the transfer of a dimethylallyl group onto the adenine at position 37 in tRNAs that read codons beginning with uridine, leading to the formation of N6-(dimethylallyl)adenosine (i(6)A). This chain is tRNA dimethylallyltransferase, found in Pediococcus pentosaceus (strain ATCC 25745 / CCUG 21536 / LMG 10740 / 183-1w).